The chain runs to 432 residues: Adenylosuccinate synthetase (432 aa).

GTP-binding positions include 13–19 (GDEGKGK) and 41–43 (GHT). Asp-14 acts as the Proton acceptor in catalysis. 2 residues coordinate Mg(2+): Asp-14 and Gly-41. IMP contacts are provided by residues 14 to 17 (DEGK), 39 to 42 (NAGH), Thr-130, Arg-144, Gln-225, Thr-240, and Arg-304. The Proton donor role is filled by His-42. Residue 300 to 306 (ATTGRRR) coordinates substrate. GTP-binding positions include Arg-306, 332–334 (KLD), and 415–417 (STG).

This sequence belongs to the adenylosuccinate synthetase family. In terms of assembly, homodimer. Mg(2+) is required as a cofactor.

The protein localises to the cytoplasm. It carries out the reaction IMP + L-aspartate + GTP = N(6)-(1,2-dicarboxyethyl)-AMP + GDP + phosphate + 2 H(+). The protein operates within purine metabolism; AMP biosynthesis via de novo pathway; AMP from IMP: step 1/2. Its function is as follows. Plays an important role in the de novo pathway of purine nucleotide biosynthesis. Catalyzes the first committed step in the biosynthesis of AMP from IMP. The polypeptide is Adenylosuccinate synthetase (Salmonella choleraesuis (strain SC-B67)).